Consider the following 317-residue polypeptide: Sulfate adenylyltransferase subunit 2 (317 aa).

2 disordered regions span residues 1–21 (MPDS…APLD) and 298–317 (RAID…EGYF).

It belongs to the PAPS reductase family. CysD subfamily. As to quaternary structure, heterodimer composed of CysD, the smaller subunit, and CysN.

It carries out the reaction sulfate + ATP + H(+) = adenosine 5'-phosphosulfate + diphosphate. It functions in the pathway sulfur metabolism; hydrogen sulfide biosynthesis; sulfite from sulfate: step 1/3. With CysN forms the ATP sulfurylase (ATPS) that catalyzes the adenylation of sulfate producing adenosine 5'-phosphosulfate (APS) and diphosphate, the first enzymatic step in sulfur assimilation pathway. APS synthesis involves the formation of a high-energy phosphoric-sulfuric acid anhydride bond driven by GTP hydrolysis by CysN coupled to ATP hydrolysis by CysD. The polypeptide is Sulfate adenylyltransferase subunit 2 (Rhizobium johnstonii (strain DSM 114642 / LMG 32736 / 3841) (Rhizobium leguminosarum bv. viciae)).